The following is a 134-amino-acid chain: S-protein homolog 31 (134 aa).

The signal sequence occupies residues 1–21 (MKILSVFLFVFSIYIFGHVSG). The N-linked (GlcNAc...) asparagine glycan is linked to N87.

It belongs to the plant self-incompatibility (S1) protein family.

The protein resides in the secreted. The protein is S-protein homolog 31 of Arabidopsis thaliana (Mouse-ear cress).